The sequence spans 730 residues: Tubulin polyglutamylase ttll-5 (730 aa).

In terms of domain architecture, TTL spans 120–478 (RLRLTFKMMR…PLLDRKIIDS (359 aa)). Residues 278-281 (SRYL), Lys-291, and Asp-293 contribute to the ATP site. The interval 594-618 (KKNTKNSSGSSKASSSSASASSSSS) is disordered. Residues 600–618 (SSGSSKASSSSASASSSSS) show a composition bias toward low complexity.

The protein belongs to the tubulin--tyrosine ligase family. Expressed in body wall muscles. Not expressed in sensory neurons.

It carries out the reaction L-glutamyl-[protein] + L-glutamate + ATP = gamma-L-glutamyl-L-glutamyl-[protein] + ADP + phosphate + H(+). Its function is as follows. Polyglutamylase which preferentially modifies alpha-tubulin. Involved in the side-chain initiation step of the polyglutamylation reaction rather than in the elongation step. Together with ttll-4 and ttll-11, required for male mating. Probably by regulating microtubule stability via the glutamylation of tubulin, negatively regulates axon regrowth after injury in PLM neurons. This chain is Tubulin polyglutamylase ttll-5, found in Caenorhabditis elegans.